Here is a 687-residue protein sequence, read N- to C-terminus: Elongation factor G (687 aa).

One can recognise a tr-type G domain in the interval 8-282 (NKFRNIGIMA…AVLAYLPSPL (275 aa)). GTP is bound by residues 17–24 (AHIDAGKT), 81–85 (DTPGH), and 135–138 (NKMD).

This sequence belongs to the TRAFAC class translation factor GTPase superfamily. Classic translation factor GTPase family. EF-G/EF-2 subfamily.

It localises to the cytoplasm. Functionally, catalyzes the GTP-dependent ribosomal translocation step during translation elongation. During this step, the ribosome changes from the pre-translocational (PRE) to the post-translocational (POST) state as the newly formed A-site-bound peptidyl-tRNA and P-site-bound deacylated tRNA move to the P and E sites, respectively. Catalyzes the coordinated movement of the two tRNA molecules, the mRNA and conformational changes in the ribosome. This Clostridium novyi (strain NT) protein is Elongation factor G.